The sequence spans 274 residues: Large ribosomal subunit protein uL2 (274 aa).

The interval 224 to 259 is disordered; the sequence is AMNPVDHPHGGGEGRTSGGRHPVTPWGIPTKGYKTR.

Belongs to the universal ribosomal protein uL2 family. In terms of assembly, part of the 50S ribosomal subunit. Forms a bridge to the 30S subunit in the 70S ribosome.

In terms of biological role, one of the primary rRNA binding proteins. Required for association of the 30S and 50S subunits to form the 70S ribosome, for tRNA binding and peptide bond formation. It has been suggested to have peptidyltransferase activity; this is somewhat controversial. Makes several contacts with the 16S rRNA in the 70S ribosome. The polypeptide is Large ribosomal subunit protein uL2 (Geobacter sp. (strain M21)).